A 585-amino-acid chain; its full sequence is Mitochondrial translation ATP-dependent RNA helicase mrh5 (585 aa).

Positions Pro87–Gln117 match the Q motif motif. Residues Asn121–Ile351 form the Helicase ATP-binding domain. Gly134–Ser141 is an ATP binding site. Residues Asp261–Asp264 carry the DEAD box motif. Positions Asn390–His584 constitute a Helicase C-terminal domain.

Belongs to the DEAD box helicase family. As to quaternary structure, component of the MRH5C complex, composed of mrh5, ppr4, mtf2, and sls1. Proteins mtf2 and sls1 form a subcomplex that serves as a scaffold to bring mrh5 and ppr4 together. The MRH5C complex associates with the small subunit of the mitochondrial ribosome.

The protein localises to the mitochondrion. The enzyme catalyses ATP + H2O = ADP + phosphate + H(+). Translation activation factor that as part of the MRH5C complex specifically recruits cox1 mRNA to the mitochondrial ribosome for translation initiation. The polypeptide is Mitochondrial translation ATP-dependent RNA helicase mrh5 (Schizosaccharomyces pombe (strain 972 / ATCC 24843) (Fission yeast)).